We begin with the raw amino-acid sequence, 199 residues long: dTTP/UTP pyrophosphatase (199 aa).

Catalysis depends on Asp76, which acts as the Proton acceptor.

The protein belongs to the Maf family. YhdE subfamily. It depends on a divalent metal cation as a cofactor.

It localises to the cytoplasm. The enzyme catalyses dTTP + H2O = dTMP + diphosphate + H(+). It catalyses the reaction UTP + H2O = UMP + diphosphate + H(+). Functionally, nucleoside triphosphate pyrophosphatase that hydrolyzes dTTP and UTP. May have a dual role in cell division arrest and in preventing the incorporation of modified nucleotides into cellular nucleic acids. This chain is dTTP/UTP pyrophosphatase, found in Chlorobaculum parvum (strain DSM 263 / NCIMB 8327) (Chlorobium vibrioforme subsp. thiosulfatophilum).